Reading from the N-terminus, the 225-residue chain is Uracil-DNA glycosylase (225 aa).

The Proton acceptor role is filled by D65.

Belongs to the uracil-DNA glycosylase (UDG) superfamily. UNG family.

The protein localises to the cytoplasm. The catalysed reaction is Hydrolyzes single-stranded DNA or mismatched double-stranded DNA and polynucleotides, releasing free uracil.. Its function is as follows. Excises uracil residues from the DNA which can arise as a result of misincorporation of dUMP residues by DNA polymerase or due to deamination of cytosine. This Anoxybacillus flavithermus (strain DSM 21510 / WK1) protein is Uracil-DNA glycosylase.